Reading from the N-terminus, the 521-residue chain is MDTESQYSGYSYKSGHSRSSRKHRDRRDRHRSKSRDGGRGDKSVTIQAPGEPLLDNESTRGDERDDNWGETTTVVTGTSEHSISHDDLTRIAKDMEDSVPLDCSRHLGVAAGATLALLSFLTPLAFLLLPPLLWREELEPCGTACEGLFISVAFKLLILLLGSWALFFRRPKASLPRVFVLRALLMVLVFLLVVSYWLFYGVRILDARERSYQGVVQFAVSLVDALLFVHYLAVVLLELRQLQPQFTLKVVRSTDGASRFYNVGHLSIQRVAVWILEKYYHDFPVYNPALLNLPKSVLAKKVSGFKVYSLGEENSTNNSTGQSRAVIAAAARRRDNSHNEYYYEEAEHERRVRKRRARLVVAVEEAFTHIKRLQEEEQKNPREVMDPREAAQAIFASMARAMQKYLRTTKQQPYHTMESILQHLEFCITHDMTPKAFLERYLAAGPTIQYHKERWLAKQWTLVSEEPVTNGLKDGIVFLLKRQDFSLVVSTKKVPFFKLSEEFVDPKSHKFVMRLQSETSV.

A disordered region spans residues 1–81; it reads MDTESQYSGY…TTVVTGTSEH (81 aa). Over 1–108 the chain is Cytoplasmic; that stretch reads MDTESQYSGY…VPLDCSRHLG (108 aa). Residues 15–33 are compositionally biased toward basic residues; the sequence is GHSRSSRKHRDRRDRHRSK. The segment covering 57-67 has biased composition (basic and acidic residues); the sequence is ESTRGDERDDN. The span at 69–81 shows a compositional bias: low complexity; sequence GETTTVVTGTSEH. The helical transmembrane segment at 109-129 threads the bilayer; it reads VAAGATLALLSFLTPLAFLLL. The Extracellular segment spans residues 130–147; sequence PPLLWREELEPCGTACEG. The chain crosses the membrane as a helical span at residues 148–168; the sequence is LFISVAFKLLILLLGSWALFF. The Cytoplasmic segment spans residues 169–178; the sequence is RRPKASLPRV. A helical membrane pass occupies residues 179–199; it reads FVLRALLMVLVFLLVVSYWLF. The Extracellular segment spans residues 200 to 217; the sequence is YGVRILDARERSYQGVVQ. Residues 218-238 form a helical membrane-spanning segment; sequence FAVSLVDALLFVHYLAVVLLE. The Cytoplasmic portion of the chain corresponds to 239 to 521; it reads LRQLQPQFTL…VMRLQSETSV (283 aa).

This sequence belongs to the Vang family. In terms of assembly, homodimer and heterodimer with VANGL1. Interacts through its C-terminal region with the N-terminal half of DVL1, DVL2 and DVL3. The PDZ domain of DVL1, DVL2 and DVL3 is required for the interaction. Also interacts with the PDZ domains of MAGI3, SCRIB/SCRB1 and FZD3. Interacts with PRICKLE3.

It is found in the cell membrane. Involved in the control of early morphogenesis and patterning of both axial midline structures and the development of neural plate. Plays a role in the regulation of planar cell polarity, particularly in the orientation of stereociliary bundles in the cochlea. Required for polarization and movement of myocardializing cells in the outflow tract and seems to act via RHOA signaling to regulate this process. Required for cell surface localization of FZD3 and FZD6 in the inner ear. In Homo sapiens (Human), this protein is Vang-like protein 2 (VANGL2).